Here is a 347-residue protein sequence, read N- to C-terminus: NADH-ubiquinone oxidoreductase chain 2 (347 aa).

The next 11 helical transmembrane spans lie at 1–21 (MNPL…MMVV), 25–45 (HWLL…PIMM), 59–79 (YLLT…INLM), 96–116 (TLMT…FWVP), 122–142 (IPLT…LSIL), 149–169 (INLH…GWGG), 178–198 (IMAY…LYNP), 200–220 (LTLL…MLFI), 237–257 (MPVI…LPPL), 274–294 (DMLI…YFYM), and 325–345 (LLPT…MLSI).

It belongs to the complex I subunit 2 family. Core subunit of respiratory chain NADH dehydrogenase (Complex I) which is composed of 45 different subunits. Interacts with TMEM242.

It is found in the mitochondrion inner membrane. It catalyses the reaction a ubiquinone + NADH + 5 H(+)(in) = a ubiquinol + NAD(+) + 4 H(+)(out). Core subunit of the mitochondrial membrane respiratory chain NADH dehydrogenase (Complex I) which catalyzes electron transfer from NADH through the respiratory chain, using ubiquinone as an electron acceptor. Essential for the catalytic activity and assembly of complex I. This chain is NADH-ubiquinone oxidoreductase chain 2, found in Balaenoptera physalus (Fin whale).